The chain runs to 662 residues: Aprataxin-like protein (662 aa).

In terms of domain architecture, HIT spans 4–108 (SSALIKDISK…ISKDFVSTSL (105 aa)). A C2H2-type zinc finger spans residues 381–403 (LRCNQCEFVTNMLLDLKAHLYQH). The segment at 482–662 (KNINGPSVNM…PAPPSNSKPS (181 aa)) is disordered. Low complexity predominate over residues 490–500 (NMMNQNNPNNP). Composition is skewed to polar residues over residues 501-513 (FRNT…QSQK) and 560-569 (GHQQFPNASS). Over residues 570–582 (VGGGQTGLPGQGQ) the composition is skewed to gly residues. Over residues 588–599 (WNSNKIFNQQNR) the composition is skewed to polar residues. Positions 600–626 (QNTVQAQPQAQNQQTNQQQIQNSNKNQ) are enriched in low complexity. A compositionally biased stretch (pro residues) spans 653 to 662 (PAPPSNSKPS).

Its subcellular location is the nucleus. Functionally, DNA-binding protein involved in single-strand DNA break repair, double-strand DNA break repair and base excision repair. Resolves abortive DNA ligation intermediates formed either at base excision sites, or when DNA ligases attempt to repair non-ligatable breaks induced by reactive oxygen species. Catalyzes the release of adenylate groups covalently linked to 5'-phosphate termini, resulting in the production of 5'-phosphate termini that can be efficiently rejoined. The polypeptide is Aprataxin-like protein (Drosophila melanogaster (Fruit fly)).